Reading from the N-terminus, the 43-residue chain is DRDSCVDKSKCGKYGYYGQCDECCKKAGDRAGICEYYKCKCNP.

4 cysteine pairs are disulfide-bonded: cysteine 5–cysteine 23, cysteine 11–cysteine 34, cysteine 20–cysteine 39, and cysteine 24–cysteine 41.

It belongs to the ergtoxin family. Gamma-KTx 4 subfamily. As to expression, expressed by the venom gland.

The protein resides in the secreted. Reversibly blocks Kv11/ERG potassium channels. This chain is Potassium channel toxin gamma-KTx 4.3, found in Centruroides exilicauda (Bark scorpion).